Consider the following 1314-residue polypeptide: E3 ubiquitin-protein ligase RNF123 (1314 aa).

Ala-2 carries the N-acetylalanine modification. Residues 74 to 254 enclose the B30.2/SPRY domain; that stretch reads VDNEEEESQG…VAFNFGSRPL (181 aa). Ser-675 bears the Phosphoserine mark. Residue Arg-683 is modified to Asymmetric dimethylarginine. Residues 968 to 974 are interaction with NFKB1; the sequence is WILVRLW. Zn(2+) is bound by residues Cys-1254, Cys-1257, Cys-1269, His-1271, Cys-1274, Cys-1277, Cys-1288, and Cys-1291. Residues 1254 to 1292 form an RING-type zinc finger; that stretch reads CPICYAHPISAVFQPCGHKSCKACINQHLMNNKDCFFCK.

As to quaternary structure, component of the KPC complex composed of RNF123/KPC1 and UBAC1/KPC2. Interacts with UBAC1 and CDKN1B via its N-terminal domain. Interacts with RIGI (via N-terminus) and IFIH1 (via N-terminus). In terms of processing, ubiquitinated, leading to its degradation. Deubiquitinated by USP19, thereby stimulating CDKN1B ubiquitin-dependent degradation.

Its subcellular location is the cytoplasm. The enzyme catalyses S-ubiquitinyl-[E2 ubiquitin-conjugating enzyme]-L-cysteine + [acceptor protein]-L-lysine = [E2 ubiquitin-conjugating enzyme]-L-cysteine + N(6)-ubiquitinyl-[acceptor protein]-L-lysine.. It participates in protein modification; protein ubiquitination. Functionally, catalytic subunit of the KPC complex that acts as E3 ubiquitin-protein ligase. Promotes the ubiquitination and proteasome-mediated degradation of CDKN1B which is the cyclin-dependent kinase inhibitor at the G0-G1 transition of the cell cycle. Also acts as a key regulator of the NF-kappa-B signaling by promoting maturation of the NFKB1 component of NF-kappa-B: acts by catalyzing ubiquitination of the NFKB1 p105 precursor, leading to limited proteasomal degradation of NFKB1 p105 and generation of the active NFKB1 p50 subunit. Also functions as an inhibitor of innate antiviral signaling mediated by RIGI and IFIH1 independently of its E3 ligase activity. Interacts with the N-terminal CARD domains of RIGI and IFIH1 and competes with the downstream adapter MAVS. The chain is E3 ubiquitin-protein ligase RNF123 from Homo sapiens (Human).